The following is an 82-amino-acid chain: Small ribosomal subunit protein uS17 (82 aa).

The protein belongs to the universal ribosomal protein uS17 family. As to quaternary structure, part of the 30S ribosomal subunit.

One of the primary rRNA binding proteins, it binds specifically to the 5'-end of 16S ribosomal RNA. The chain is Small ribosomal subunit protein uS17 from Azorhizobium caulinodans (strain ATCC 43989 / DSM 5975 / JCM 20966 / LMG 6465 / NBRC 14845 / NCIMB 13405 / ORS 571).